Here is a 504-residue protein sequence, read N- to C-terminus: MKLLEQIEKWATETPDQTAFVWRDAKITYKQLKDDSDALAHWISSEYPDDSSPIMVYGHMQPDMIISFLGCVKAGHAYIPVDLSIPADRVLRIAESSGAKLLLSAAELTVTDLPVRTVSQNNLKDIFFTHKGKIPNPEHAVKDDENFYIIYTSGSTGNPKGVQITHNCLVSFTKWAIQDFNLQTGQVFLNQAPFSFDLSVMDIYPSLVTGGTLWAIDKDMIARPKDLFASLKQSNIQVWTSTPSFAEMCLMETSFSESMLPNMKTFLFCGEVLPNEVAKKLMERFPKATIMNTYGPTEATVAVTSIPVTQEVIDTYQSLPVGYCKSDCRLLIMKEDGTIASDGEKGEIVIVGPSVSVGYLGSPELTEKSFTMIDGERAYKTGDAGYMENGLLFYNGRLDFQIKLHGYRMELEEIEHHLRACSYVEGAVIVPIKKGEKYDYLLAVVVPGEHSFEKEFKLTSAIKKELNERLPNYMIPRKFMYQSSIPMTPNGKVDRKKLLSEVTA.

152-153 (TS) contacts ATP. Asp-197 lines the D-alanine pocket. 292–297 (NTYGPT) lines the ATP pocket. Val-301 is a D-alanine binding site. ATP is bound by residues Asp-383, 394 to 397 (YNGR), and Lys-492. Lys-492 provides a ligand contact to D-alanine.

This sequence belongs to the ATP-dependent AMP-binding enzyme family. DltA subfamily.

It is found in the cytoplasm. The enzyme catalyses holo-[D-alanyl-carrier protein] + D-alanine + ATP = D-alanyl-[D-alanyl-carrier protein] + AMP + diphosphate. The protein operates within cell wall biogenesis; lipoteichoic acid biosynthesis. Functionally, catalyzes the first step in the D-alanylation of lipoteichoic acid (LTA), the activation of D-alanine and its transfer onto the D-alanyl carrier protein (Dcp) DltC. In an ATP-dependent two-step reaction, forms a high energy D-alanyl-AMP intermediate, followed by transfer of the D-alanyl residue as a thiol ester to the phosphopantheinyl prosthetic group of the Dcp. D-alanylation of LTA plays an important role in modulating the properties of the cell wall in Gram-positive bacteria, influencing the net charge of the cell wall. The polypeptide is D-alanine--D-alanyl carrier protein ligase (Bacillus cytotoxicus (strain DSM 22905 / CIP 110041 / 391-98 / NVH 391-98)).